Reading from the N-terminus, the 222-residue chain is Large ribosomal subunit protein uL1 (222 aa).

This sequence belongs to the universal ribosomal protein uL1 family. Part of the 50S ribosomal subunit.

Functionally, binds directly to 23S rRNA. Probably involved in E site tRNA release. Its function is as follows. Protein L1 is also a translational repressor protein, it controls the translation of its operon by binding to its mRNA. The protein is Large ribosomal subunit protein uL1 of Pyrobaculum islandicum (strain DSM 4184 / JCM 9189 / GEO3).